The following is an 891-amino-acid chain: Protein translocase subunit SecA 1 (891 aa).

ATP contacts are provided by residues glutamine 86, 104–108 (GEGKT), and aspartate 493. Residues 845 to 873 (KQVAKPIEASHGDGNRKKAPVVKEKEAGR) are compositionally biased toward basic and acidic residues. Positions 845 to 891 (KQVAKPIEASHGDGNRKKAPVVKEKEAGRNDPCPCGSGKKYKKCCGE) are disordered. Residues cysteine 877, cysteine 879, cysteine 888, and cysteine 889 each contribute to the Zn(2+) site.

The protein belongs to the SecA family. In terms of assembly, monomer and homodimer. Part of the essential Sec protein translocation apparatus which comprises SecA, SecYEG and auxiliary proteins SecDF. Other proteins may also be involved. The cofactor is Zn(2+).

The protein resides in the cell membrane. It localises to the cytoplasm. It catalyses the reaction ATP + H2O + cellular proteinSide 1 = ADP + phosphate + cellular proteinSide 2.. Part of the Sec protein translocase complex. Interacts with the SecYEG preprotein conducting channel. Has a central role in coupling the hydrolysis of ATP to the transfer of proteins into and across the cell membrane, serving as an ATP-driven molecular motor driving the stepwise translocation of polypeptide chains across the membrane. The polypeptide is Protein translocase subunit SecA 1 (Alkaliphilus metalliredigens (strain QYMF)).